The chain runs to 196 residues: Imidazole glycerol phosphate synthase subunit HisH (196 aa).

The Glutamine amidotransferase type-1 domain occupies 2 to 196; that stretch reads DVVILDTGCA…AQLMKNFLEM (195 aa). Cys-77 (nucleophile) is an active-site residue. Residues His-178 and Glu-180 contribute to the active site.

As to quaternary structure, heterodimer of HisH and HisF.

It localises to the cytoplasm. It catalyses the reaction 5-[(5-phospho-1-deoxy-D-ribulos-1-ylimino)methylamino]-1-(5-phospho-beta-D-ribosyl)imidazole-4-carboxamide + L-glutamine = D-erythro-1-(imidazol-4-yl)glycerol 3-phosphate + 5-amino-1-(5-phospho-beta-D-ribosyl)imidazole-4-carboxamide + L-glutamate + H(+). The catalysed reaction is L-glutamine + H2O = L-glutamate + NH4(+). It participates in amino-acid biosynthesis; L-histidine biosynthesis; L-histidine from 5-phospho-alpha-D-ribose 1-diphosphate: step 5/9. Its function is as follows. IGPS catalyzes the conversion of PRFAR and glutamine to IGP, AICAR and glutamate. The HisH subunit catalyzes the hydrolysis of glutamine to glutamate and ammonia as part of the synthesis of IGP and AICAR. The resulting ammonia molecule is channeled to the active site of HisF. The polypeptide is Imidazole glycerol phosphate synthase subunit HisH (Yersinia pestis).